Reading from the N-terminus, the 320-residue chain is 1,5-anhydro-D-fructose reductase (320 aa).

Residue aspartate 35 coordinates NADP(+). Tyrosine 40 serves as the catalytic Proton donor. Residue histidine 102 coordinates substrate. Residues glutamine 194 and 265–277 contribute to the NADP(+) site; that span reads IPGS…IKEN.

Belongs to the aldo/keto reductase family. Monomer. As to expression, specifically expressed in testis. Expressed in testicular germ cells and testis interstitial cells.

Its subcellular location is the cytoplasm. The catalysed reaction is 1,5-anhydro-D-glucitol + NADP(+) = 1,5-anhydro-D-fructose + NADPH + H(+). Its activity is regulated as follows. Inhibited by p-chloromercuribenzoic acid and alkyliodines. In terms of biological role, catalyzes the NADPH-dependent reduction of 1,5-anhydro-D-fructose (AF) to 1,5-anhydro-D-glucitol. Has low NADPH-dependent reductase activity towards 9,10-phenanthrenequinone (in vitro). The protein is 1,5-anhydro-D-fructose reductase (AKR1E2) of Homo sapiens (Human).